The primary structure comprises 902 residues: Protein translocase subunit SecA (902 aa).

ATP-binding positions include Gln-87, 105 to 109 (GEGKT), and Asp-512. The segment at 850-902 (RLAKQQQLSHEVTKESQMSAVDGQVASGKKVGRNEPCPCGSGKKYKHCHGKLG) is disordered. Residues 853–868 (KQQQLSHEVTKESQMS) show a composition bias toward polar residues. 4 residues coordinate Zn(2+): Cys-886, Cys-888, Cys-897, and His-898. Residues 892–902 (KKYKHCHGKLG) show a composition bias toward basic residues.

It belongs to the SecA family. In terms of assembly, monomer and homodimer. Part of the essential Sec protein translocation apparatus which comprises SecA, SecYEG and auxiliary proteins SecDF-YajC and YidC. Zn(2+) is required as a cofactor.

It localises to the cell inner membrane. Its subcellular location is the cytoplasm. It carries out the reaction ATP + H2O + cellular proteinSide 1 = ADP + phosphate + cellular proteinSide 2.. In terms of biological role, part of the Sec protein translocase complex. Interacts with the SecYEG preprotein conducting channel. Has a central role in coupling the hydrolysis of ATP to the transfer of proteins into and across the cell membrane, serving both as a receptor for the preprotein-SecB complex and as an ATP-driven molecular motor driving the stepwise translocation of polypeptide chains across the membrane. This Proteus mirabilis (strain HI4320) protein is Protein translocase subunit SecA.